A 294-amino-acid chain; its full sequence is F-box protein SKIP3 (294 aa).

Residues 21–67 (SSTLDSLPEGCISNIISFTSPEDACVAAAVSKIFESAVKSDIVWEKF) enclose the F-box domain.

As to quaternary structure, part of a SCF (SKP1-cullin-F-box) protein ligase complex. Interacts with SKP1A/ASK1.

The protein operates within protein modification; protein ubiquitination. The polypeptide is F-box protein SKIP3 (SKIP3) (Arabidopsis thaliana (Mouse-ear cress)).